The sequence spans 430 residues: Chaperone SurA (430 aa).

Positions 1–25 (MQIIKTTIATFTAIAFTGAASFTSA) are cleaved as a signal peptide. 2 consecutive PpiC domains span residues 176–277 (SPDY…KLYE) and 286–385 (VNQT…KVEE).

It localises to the periplasm. It catalyses the reaction [protein]-peptidylproline (omega=180) = [protein]-peptidylproline (omega=0). Functionally, chaperone involved in the correct folding and assembly of outer membrane proteins. Recognizes specific patterns of aromatic residues and the orientation of their side chains, which are found more frequently in integral outer membrane proteins. May act in both early periplasmic and late outer membrane-associated steps of protein maturation. This Saccharophagus degradans (strain 2-40 / ATCC 43961 / DSM 17024) protein is Chaperone SurA.